Reading from the N-terminus, the 441-residue chain is Polycomb protein EED (441 aa).

The interval 1 to 72 (MSEREVSTVP…PGRKSWGKGK (72 aa)) is disordered. Position 2 is an N-acetylserine (Ser2). 2 positions are modified to phosphoserine: Ser2 and Ser34. Positions 45–61 (ESGTNTERPDTPTNTPN) are enriched in polar residues. A Phosphothreonine modification is found at Thr55. At Lys66 the chain carries N6,N6,N6-trimethyllysine; alternate. Lys66 is modified (N6,N6-dimethyllysine; alternate). Position 66 is an N6-methyllysine; alternate (Lys66). An interaction with EZH2 region spans residues 81-441 (SFKCVNSLKE…ASIWRWDRLR (361 aa)). WD repeat units lie at residues 91–134 (DHNQ…EIRL), 142–185 (DADE…CIKH), 188–228 (GHGN…LVAI), and 234–275 (GHRD…NAIK). N6,N6,N6-trimethyllysine; alternate is present on residues Lys197, Lys268, and Lys284. An N6,N6-dimethyllysine; alternate mark is found at Lys197, Lys268, and Lys284. 3 positions are modified to N6-methyllysine; alternate: Lys197, Lys268, and Lys284. WD repeat units lie at residues 304-341 (IHRN…DDID), 359-399 (SQCD…PHKA), and 408-441 (KCGA…DRLR).

This sequence belongs to the WD repeat ESC family. As to quaternary structure, component of the PRC2/EED-EZH2 complex, which includes EED, EZH2, SUZ12, RBBP4 and RBBP7 and possibly AEBP2. The minimum components required for methyltransferase activity of the PRC2/EED-EZH2 complex are EED, EZH2 and SUZ12. Component of the PRC2/EED-EZH1 complex, which includes EED, EZH1, SUZ12, RBBP4 and AEBP2. The PRC2 complex may also interact with DNMT1, DNMT3A, DNMT3B and PHF1 via the EZH2 subunit and with SIRT1 via the SUZ12 subunit. Interacts with HDAC, HDAC2, histone H1, KMT2A/MLL1 and YY1. May interact with ITGA4, ITGAE and ITGB7. Interacts with CDYL. Interacts with BMAL1. Methylated. Binding to histone H1 'Lys-26' promotes mono-, di-, and trimethylation of internal lysines.

It is found in the nucleus. Its function is as follows. Polycomb group (PcG) protein. Component of the PRC2/EED-EZH2 complex, which methylates 'Lys-9' and 'Lys-27' of histone H3, leading to transcriptional repression of the affected target gene. Also recognizes 'Lys-26' trimethylated histone H1 with the effect of inhibiting PRC2 complex methyltransferase activity on nucleosomal histone H3 'Lys-27', whereas H3 'Lys-27' recognition has the opposite effect, enabling the propagation of this repressive mark. The PRC2/EED-EZH2 complex may also serve as a recruiting platform for DNA methyltransferases, thereby linking two epigenetic repression systems. This Bos taurus (Bovine) protein is Polycomb protein EED (EED).